The chain runs to 206 residues: 3-isopropylmalate dehydratase small subunit (206 aa).

It belongs to the LeuD family. LeuD type 1 subfamily. Heterodimer of LeuC and LeuD.

The enzyme catalyses (2R,3S)-3-isopropylmalate = (2S)-2-isopropylmalate. Its pathway is amino-acid biosynthesis; L-leucine biosynthesis; L-leucine from 3-methyl-2-oxobutanoate: step 2/4. Its function is as follows. Catalyzes the isomerization between 2-isopropylmalate and 3-isopropylmalate, via the formation of 2-isopropylmaleate. This Leptospira borgpetersenii serovar Hardjo-bovis (strain L550) protein is 3-isopropylmalate dehydratase small subunit.